Here is a 326-residue protein sequence, read N- to C-terminus: Pyruvate dehydrogenase E1 component subunit beta (326 aa).

Glutamate 59 is a thiamine diphosphate binding site.

In terms of assembly, heterodimer of an alpha and a beta chain. Requires thiamine diphosphate as cofactor.

It catalyses the reaction N(6)-[(R)-lipoyl]-L-lysyl-[protein] + pyruvate + H(+) = N(6)-[(R)-S(8)-acetyldihydrolipoyl]-L-lysyl-[protein] + CO2. Functionally, the pyruvate dehydrogenase complex catalyzes the overall conversion of pyruvate to acetyl-CoA and CO(2). It contains multiple copies of three enzymatic components: pyruvate dehydrogenase (E1), dihydrolipoamide acetyltransferase (E2) and lipoamide dehydrogenase (E3). In Rickettsia conorii (strain ATCC VR-613 / Malish 7), this protein is Pyruvate dehydrogenase E1 component subunit beta (pdhB).